The sequence spans 525 residues: MSEPVSTPEHRIPIRRALVSVYDKTDLEDLVRGLHDAGVELVSTGGSAKLIEGLGLPVTKVEDLTGFPECLDGRVKTLHPRVHAGILADRRLDSHVQQLADLGVEPFDLVVSNLYPFRETVASGATPDECVEQIDIGGPSMVRAAAKNHPSVAIVTSPERYADVLAAVAAGGFTLEQRKVLAAEAFTHTAAYDVAVAGWFASTYVPAEDGWPEFAGETWQKAAVLRYGENPHQDAALYTDSSGGGGLAGAEQLHGKEMSYNNYVDTDAARRAAYDFDEPAVAIIKHANPCGIAVGADVAEAHRRAHECDPVSAFGGVIAVNRPVSVEMARQVADVFTEVIVAPSYDEGAVEILQGKKNIRILRCADPAEERSTELRQISGGVLVQVRDHVDATGDDPSTWTLAAGEPASAEVLADLAFAWTACRAAKSNAILLAKDGASVGIGMGQVNRVDSCRLAVSRAGDRAAGSVAASDAFFPFEDGPQILIDAGVTAIVQPGGSVRDELTVEAAKAAGVTMYFTGTRHFFH.

An MGS-like domain is found at 10 to 156 (HRIPIRRALV…KNHPSVAIVT (147 aa)).

The protein belongs to the PurH family.

It carries out the reaction (6R)-10-formyltetrahydrofolate + 5-amino-1-(5-phospho-beta-D-ribosyl)imidazole-4-carboxamide = 5-formamido-1-(5-phospho-D-ribosyl)imidazole-4-carboxamide + (6S)-5,6,7,8-tetrahydrofolate. The enzyme catalyses IMP + H2O = 5-formamido-1-(5-phospho-D-ribosyl)imidazole-4-carboxamide. The protein operates within purine metabolism; IMP biosynthesis via de novo pathway; 5-formamido-1-(5-phospho-D-ribosyl)imidazole-4-carboxamide from 5-amino-1-(5-phospho-D-ribosyl)imidazole-4-carboxamide (10-formyl THF route): step 1/1. Its pathway is purine metabolism; IMP biosynthesis via de novo pathway; IMP from 5-formamido-1-(5-phospho-D-ribosyl)imidazole-4-carboxamide: step 1/1. This chain is Bifunctional purine biosynthesis protein PurH, found in Nocardioides sp. (strain ATCC BAA-499 / JS614).